A 427-amino-acid polypeptide reads, in one-letter code: Mitochondrial distribution and morphology protein 10 (427 aa).

A compositionally biased stretch (low complexity) spans 393–414 (SSYANSQATAGAQGSSGGPPTS). Residues 393 to 427 (SSYANSQATAGAQGSSGGPPTSYWRGVGVSVSYSS) form a disordered region.

The protein belongs to the MDM10 family. Component of the ER-mitochondria encounter structure (ERMES) or MDM complex, composed of mmm1, mdm10, mdm12 and mdm34. Associates with the mitochondrial outer membrane sorting assembly machinery SAM(core) complex.

Its subcellular location is the mitochondrion outer membrane. In terms of biological role, component of the ERMES/MDM complex, which serves as a molecular tether to connect the endoplasmic reticulum and mitochondria. Components of this complex are involved in the control of mitochondrial shape and protein biogenesis and may function in phospholipid exchange. mdm10 is involved in the late assembly steps of the general translocase of the mitochondrial outer membrane (TOM complex). Functions in the tom40-specific route of the assembly of outer membrane beta-barrel proteins, including the association of tom40 with the receptor tom22 and small TOM proteins. Can associate with the SAM(core) complex as well as the mdm12-mmm1 complex, both involved in late steps of the major beta-barrel assembly pathway, that is responsible for biogenesis of all outer membrane beta-barrel proteins. May act as a switch that shuttles between both complexes and channels precursor proteins into the tom40-specific pathway. Plays a role in mitochondrial morphology and in the inheritance of mitochondria. The polypeptide is Mitochondrial distribution and morphology protein 10 (mdmB) (Emericella nidulans (strain FGSC A4 / ATCC 38163 / CBS 112.46 / NRRL 194 / M139) (Aspergillus nidulans)).